Reading from the N-terminus, the 434-residue chain is DNA primase large subunit PriL (434 aa).

Residues Cys281, Cys392, Cys403, and Cys409 each coordinate [4Fe-4S] cluster.

The protein belongs to the eukaryotic-type primase large subunit family. As to quaternary structure, heterodimer of a small subunit (PriS) and a large subunit (PriL). The cofactor is [4Fe-4S] cluster.

In terms of biological role, regulatory subunit of DNA primase, an RNA polymerase that catalyzes the synthesis of short RNA molecules used as primers for DNA polymerase during DNA replication. Stabilizes and modulates the activity of the small subunit, increasing the rate of DNA synthesis, and conferring RNA synthesis capability. The DNA polymerase activity may enable DNA primase to also catalyze primer extension after primer synthesis. May also play a role in DNA repair. The sequence is that of DNA primase large subunit PriL from Methanothermobacter thermautotrophicus (strain ATCC 29096 / DSM 1053 / JCM 10044 / NBRC 100330 / Delta H) (Methanobacterium thermoautotrophicum).